The sequence spans 216 residues: GTP cyclohydrolase 1 (216 aa).

Residues cysteine 108, histidine 111, and cysteine 179 each coordinate Zn(2+).

Belongs to the GTP cyclohydrolase I family. As to quaternary structure, toroid-shaped homodecamer, composed of two pentamers of five dimers.

It catalyses the reaction GTP + H2O = 7,8-dihydroneopterin 3'-triphosphate + formate + H(+). The protein operates within cofactor biosynthesis; 7,8-dihydroneopterin triphosphate biosynthesis; 7,8-dihydroneopterin triphosphate from GTP: step 1/1. The protein is GTP cyclohydrolase 1 of Shewanella oneidensis (strain ATCC 700550 / JCM 31522 / CIP 106686 / LMG 19005 / NCIMB 14063 / MR-1).